The sequence spans 482 residues: uncharacterized protein (482 aa).

One can recognise an HTH gntR-type domain in the interval 12–80; sequence LPKYRQIVHF…MGKGTVVINN (69 aa). The segment at residues 40–59 is a DNA-binding region (H-T-H motif); sequence QRTLAKDFQVNRSTVITALE. K325 carries the N6-(pyridoxal phosphate)lysine modification.

In the C-terminal section; belongs to the class-I pyridoxal-phosphate-dependent aminotransferase family. It depends on pyridoxal 5'-phosphate as a cofactor.

This is an uncharacterized protein from Bacillus subtilis (strain 168).